The chain runs to 197 residues: Holliday junction branch migration complex subunit RuvA (197 aa).

The tract at residues Met-1 to His-63 is domain I. The interval Thr-64 to Ser-142 is domain II. The flexible linker stretch occupies residues Lys-143–Ile-147. Residues Asn-148–Lys-197 form a domain III region.

Belongs to the RuvA family. Homotetramer. Forms an RuvA(8)-RuvB(12)-Holliday junction (HJ) complex. HJ DNA is sandwiched between 2 RuvA tetramers; dsDNA enters through RuvA and exits via RuvB. An RuvB hexamer assembles on each DNA strand where it exits the tetramer. Each RuvB hexamer is contacted by two RuvA subunits (via domain III) on 2 adjacent RuvB subunits; this complex drives branch migration. In the full resolvosome a probable DNA-RuvA(4)-RuvB(12)-RuvC(2) complex forms which resolves the HJ.

It localises to the cytoplasm. The RuvA-RuvB-RuvC complex processes Holliday junction (HJ) DNA during genetic recombination and DNA repair, while the RuvA-RuvB complex plays an important role in the rescue of blocked DNA replication forks via replication fork reversal (RFR). RuvA specifically binds to HJ cruciform DNA, conferring on it an open structure. The RuvB hexamer acts as an ATP-dependent pump, pulling dsDNA into and through the RuvAB complex. HJ branch migration allows RuvC to scan DNA until it finds its consensus sequence, where it cleaves and resolves the cruciform DNA. The protein is Holliday junction branch migration complex subunit RuvA of Streptococcus mutans serotype c (strain ATCC 700610 / UA159).